The primary structure comprises 360 residues: G-box-binding factor 2 (360 aa).

Polar residues predominate over residues 1-16; that stretch reads MGSNEEGNPTNNSDKP. Disordered regions lie at residues 1–26 and 150–275; these read MGSNEEGNPTNNSDKPSQAAAPEQSN and KVGS…AETE. Positions 164–184 are enriched in low complexity; that stretch reads SQSSENDGSSNGSDGNTTGGE. The span at 198 to 208 shows a compositional bias: polar residues; it reads TGERPSSQNSL. Positions 246–264 are enriched in basic and acidic residues; that stretch reads NEKEVKREKRKQSNRESAR. In terms of domain architecture, bZIP spans 249–312; sequence EVKREKRKQS…EKLRLENEAI (64 aa). The basic motif stretch occupies residues 251–270; that stretch reads KREKRKQSNRESARRSRLRK. Residues 277–312 are leucine-zipper; that stretch reads LSVKVDALVAENMSLRSKLGQLNNESEKLRLENEAI. Over residues 335 to 352 the composition is skewed to polar residues; it reads NSVSGSKTVQHQLLNASP. Residues 335-360 form a disordered region; it reads NSVSGSKTVQHQLLNASPITDPVAAS.

The protein belongs to the bZIP family. As to quaternary structure, DNA-binding heterodimer. Interacts with GBF4. Interacts with BZIP16 and BZIP68. Found in both light and dark grown leaves.

The protein resides in the nucleus. Its function is as follows. Binds to the G-box motif (5'-CCACGTGG-3') of the rbcS-1A gene promoter. G-box and G-box-like motifs are cis-acting elements defined in promoters of certain plant genes which are regulated by such diverse stimuli as light-induction or hormone control. GBF2 is found to bind asymmetrically to the G-box. The polypeptide is G-box-binding factor 2 (GBF2) (Arabidopsis thaliana (Mouse-ear cress)).